A 119-amino-acid polypeptide reads, in one-letter code: Large ribosomal subunit protein bL19 (119 aa).

The protein belongs to the bacterial ribosomal protein bL19 family.

This protein is located at the 30S-50S ribosomal subunit interface and may play a role in the structure and function of the aminoacyl-tRNA binding site. The chain is Large ribosomal subunit protein bL19 from Pediococcus pentosaceus (strain ATCC 25745 / CCUG 21536 / LMG 10740 / 183-1w).